A 269-amino-acid polypeptide reads, in one-letter code: Cytochrome c oxidase subunit 3 (269 aa).

Transmembrane regions (helical) follow at residues 21-41 (PWPI…ALAM), 45-65 (IGNM…ATLW), 90-110 (GFLL…WAYF), 138-160 (PLLN…HALI), 167-187 (ALSG…CQYI), 205-225 (FYAG…MLAI), and 247-267 (VIYL…FYWW).

Belongs to the cytochrome c oxidase subunit 3 family. As to quaternary structure, component of the cytochrome c oxidase (complex IV, CIV), a multisubunit enzyme composed of a catalytic core of 3 subunits and several supernumerary subunits. The complex exists as a monomer or a dimer and forms supercomplexes (SCs) in the inner mitochondrial membrane with ubiquinol-cytochrome c oxidoreductase (cytochrome b-c1 complex, complex III, CIII).

The protein resides in the mitochondrion inner membrane. The catalysed reaction is 4 Fe(II)-[cytochrome c] + O2 + 8 H(+)(in) = 4 Fe(III)-[cytochrome c] + 2 H2O + 4 H(+)(out). Functionally, component of the cytochrome c oxidase, the last enzyme in the mitochondrial electron transport chain which drives oxidative phosphorylation. The respiratory chain contains 3 multisubunit complexes succinate dehydrogenase (complex II, CII), ubiquinol-cytochrome c oxidoreductase (cytochrome b-c1 complex, complex III, CIII) and cytochrome c oxidase (complex IV, CIV), that cooperate to transfer electrons derived from NADH and succinate to molecular oxygen, creating an electrochemical gradient over the inner membrane that drives transmembrane transport and the ATP synthase. Cytochrome c oxidase is the component of the respiratory chain that catalyzes the reduction of oxygen to water. Electrons originating from reduced cytochrome c in the intermembrane space (IMS) are transferred via the dinuclear copper A center (CU(A)) of subunit 2 and heme A of subunit 1 to the active site in subunit 1, a binuclear center (BNC) formed by heme A3 and copper B (CU(B)). The BNC reduces molecular oxygen to 2 water molecules using 4 electrons from cytochrome c in the IMS and 4 protons from the mitochondrial matrix. This chain is Cytochrome c oxidase subunit 3 (COX3), found in Lachancea kluyveri (strain ATCC 58438 / CBS 3082 / BCRC 21498 / NBRC 1685 / JCM 7257 / NCYC 543 / NRRL Y-12651) (Yeast).